A 187-amino-acid polypeptide reads, in one-letter code: Tetratricopeptide repeat protein 36 (187 aa).

TPR repeat units lie at residues 47–80 (VKDL…LPQR), 82–114 (SAYN…SNGK), and 119–152 (CQAL…GSEF).

It belongs to the TTC36 family.

The protein is Tetratricopeptide repeat protein 36 (ttc36) of Danio rerio (Zebrafish).